Reading from the N-terminus, the 590-residue chain is V-type ATP synthase alpha chain (590 aa).

232-239 (GPFGSGKT) contacts ATP.

Belongs to the ATPase alpha/beta chains family.

It catalyses the reaction ATP + H2O + 4 H(+)(in) = ADP + phosphate + 5 H(+)(out). In terms of biological role, produces ATP from ADP in the presence of a proton gradient across the membrane. The V-type alpha chain is a catalytic subunit. The polypeptide is V-type ATP synthase alpha chain (Thermoanaerobacter sp. (strain X514)).